A 293-amino-acid polypeptide reads, in one-letter code: Adenylyl-sulfate kinase 2, chloroplastic (293 aa).

The transit peptide at 1 to 59 (MEGLAIRASRPSVFCSIPGLGGDSHRKPPSDGFLKLPASSIPADSRKLVANSTSFHPIS) directs the protein to the chloroplast. Residue 122–130 (GLSGSGKST) coordinates ATP. Substrate is bound by residues D152, R155, R169, N172, 195-196 (IS), and G245. Catalysis depends on S196, which acts as the Phosphoserine intermediate.

This sequence belongs to the APS kinase family. In terms of assembly, interacts with APK1. Expressed in root vasculature, root tips, leaf epidermal cells and funiculus of developing seeds.

It is found in the plastid. The protein localises to the chloroplast. It carries out the reaction adenosine 5'-phosphosulfate + ATP = 3'-phosphoadenylyl sulfate + ADP + H(+). Its pathway is sulfur metabolism; hydrogen sulfide biosynthesis; sulfite from sulfate: step 2/3. Its function is as follows. Catalyzes the synthesis of activated sulfate. Essential for plant reproduction and viability. Required for the production of glucosinolates. In Arabidopsis thaliana (Mouse-ear cress), this protein is Adenylyl-sulfate kinase 2, chloroplastic (APK2).